A 473-amino-acid chain; its full sequence is Serine/threonine-protein phosphatase T (473 aa).

TPR repeat units lie at residues 5 to 38 (ALEL…DSTN), 40 to 72 (ILYS…DPEY), and 73 to 106 (AKAY…APSD). The segment at 159 to 472 (KQITKEFVED…MAYANGLLSG (314 aa)) is catalytic. Mn(2+)-binding residues include aspartate 217, histidine 219, aspartate 246, and asparagine 278. Histidine 279 functions as the Proton donor/acceptor in the catalytic mechanism. Mn(2+) contacts are provided by histidine 327 and histidine 404.

This sequence belongs to the PPP phosphatase family. PP-5 (PP-T) subfamily. Mg(2+) serves as cofactor. The cofactor is Mn(2+).

It localises to the nucleus. It carries out the reaction O-phospho-L-seryl-[protein] + H2O = L-seryl-[protein] + phosphate. The enzyme catalyses O-phospho-L-threonyl-[protein] + H2O = L-threonyl-[protein] + phosphate. Functionally, protein phosphatase that specifically binds to and dephosphorylates the molecular chaperone Hsp90. Dephosphorylation positively regulates the Hsp90 chaperone machinery. The chain is Serine/threonine-protein phosphatase T (ppt1) from Schizosaccharomyces pombe (strain 972 / ATCC 24843) (Fission yeast).